Here is a 414-residue protein sequence, read N- to C-terminus: MTTQRSPGLFRRLAHGSLVKQILVGLVLGILLAWISKPAAEAVGLLGTLFVGALKAVAPILVLMLVMASIANHQHGQKTNIRPILFLYLLGTFSAALAAVVFSFAFPSTLHLSSSAGDISPPSGIVEVMRGLVMSMVSNPIDALLKGNYIGILVWAIGLGFALRHGNETTKNLVNDLSNAVTFMVKLVIRFAPIGIFGLVSSTLATTGFSTLWGYAQLLVVLVGCMLLVALVVNPLLVWWKIRRNPFPLVLLCLRESGVYAFFTRSSAANIPVNMALCEKLNLDRDTYSVSIPLGATINMAGAAITITVLTLAAVNTLGIPVDLPTALLLSVVASLCACGASGVAGGSLLLIPLACNMFGISNDIAMQVVAVGFIIGVLQDSCETALNSSTDVLFTAAACQAEDDRLANSALRN.

Over 2–15 (TTQRSPGLFRRLAH) the chain is Cytoplasmic. Residues 16-36 (GSLVKQILVGLVLGILLAWIS) form a helical membrane-spanning segment. Over 37–45 (KPAAEAVGL) the chain is Periplasmic. Residues 46 to 66 (LGTLFVGALKAVAPILVLMLV) traverse the membrane as a helical segment. At 67-83 (MASIANHQHGQKTNIRP) the chain is on the cytoplasmic side. The chain crosses the membrane as a helical span at residues 84-104 (ILFLYLLGTFSAALAAVVFSF). The Periplasmic portion of the chain corresponds to 105 to 142 (AFPSTLHLSSSAGDISPPSGIVEVMRGLVMSMVSNPID). The helical transmembrane segment at 143-163 (ALLKGNYIGILVWAIGLGFAL) threads the bilayer. At 164 to 179 (RHGNETTKNLVNDLSN) the chain is on the cytoplasmic side. Residues 180–200 (AVTFMVKLVIRFAPIGIFGLV) form a helical membrane-spanning segment. Topologically, residues 201-217 (SSTLATTGFSTLWGYAQ) are periplasmic. The helical transmembrane segment at 218 to 238 (LLVVLVGCMLLVALVVNPLLV) threads the bilayer. The Cytoplasmic segment spans residues 239 to 299 (WWKIRRNPFP…VSIPLGATIN (61 aa)). Residues 300–320 (MAGAAITITVLTLAAVNTLGI) traverse the membrane as a helical segment. Residues 321 to 331 (PVDLPTALLLS) lie on the Periplasmic side of the membrane. A helical transmembrane segment spans residues 332–352 (VVASLCACGASGVAGGSLLLI). Residues 353-414 (PLACNMFGIS…DRLANSALRN (62 aa)) are Cytoplasmic-facing.

Belongs to the dicarboxylate/amino acid:cation symporter (DAACS) (TC 2.A.23) family.

The protein localises to the cell inner membrane. The enzyme catalyses L-serine(in) + Na(+)(in) = L-serine(out) + Na(+)(out). The catalysed reaction is L-threonine(in) + Na(+)(in) = L-threonine(out) + Na(+)(out). Involved in the import of serine and threonine into the cell, with the concomitant import of sodium (symport system). This Shigella boydii serotype 4 (strain Sb227) protein is Serine/threonine transporter SstT.